A 415-amino-acid polypeptide reads, in one-letter code: MTEQSAHEKYEFKKKLESLRDKKGRSTELISLYIPADKQIFDVTNQLKDEHGQAANIKSKLTRTNVQGAIESLLSRLRYLDKVPENGIVYFTGAVDIGANKTSMESEVIIPPEPITVYKYHCDSSFYLEPLEDMLKDKSTFGLLVLDRREATIGLLVGKRIQAFRNLTSTVPGKQRKGGQSAHRFQQLRLIAIHDFYKRIGDAASEIFMAVDHKDLKGVLIGGPSPTKEEFYGGEFLHHELQKKILGLFDTAYTDESGLSELVNAAGEKLQDLELMGQKNAVRDFFKELIADSGKVAYGETQVRANLEINAVDVLLLSEDLRAERVTTKCSVCGYENKWTRRWKPGEPAPTAGNCPKCGSSLEVTDVIDVVDEFSELADKSNAKVVFVSTDFDEGSQLMNAFGGIAAILRYSTGV.

The protein belongs to the eukaryotic release factor 1 family. Heterodimer of two subunits, one of which binds GTP.

It is found in the cytoplasm. Directs the termination of nascent peptide synthesis (translation) in response to the termination codons UAA, UAG and UGA. In Methanosarcina acetivorans (strain ATCC 35395 / DSM 2834 / JCM 12185 / C2A), this protein is Peptide chain release factor subunit 1-1.